Reading from the N-terminus, the 241-residue chain is Phosphoribosylaminoimidazole-succinocarboxamide synthase (241 aa).

The protein belongs to the SAICAR synthetase family.

The enzyme catalyses 5-amino-1-(5-phospho-D-ribosyl)imidazole-4-carboxylate + L-aspartate + ATP = (2S)-2-[5-amino-1-(5-phospho-beta-D-ribosyl)imidazole-4-carboxamido]succinate + ADP + phosphate + 2 H(+). It participates in purine metabolism; IMP biosynthesis via de novo pathway; 5-amino-1-(5-phospho-D-ribosyl)imidazole-4-carboxamide from 5-amino-1-(5-phospho-D-ribosyl)imidazole-4-carboxylate: step 1/2. The polypeptide is Phosphoribosylaminoimidazole-succinocarboxamide synthase (Caldivirga maquilingensis (strain ATCC 700844 / DSM 13496 / JCM 10307 / IC-167)).